The following is a 318-amino-acid chain: NADH-ubiquinone oxidoreductase chain 1 (318 aa).

8 consecutive transmembrane segments (helical) span residues 2-22, 68-88, 102-122, 146-166, 171-191, 217-237, 253-273, and 294-314; these read FLMN…FLTL, ISLF…MWIP, ILFI…SGWA, LAII…SSLI, FTWL…STLA, AGPF…MNAL, EMFT…FLWI, and LPLT…MACI.

Belongs to the complex I subunit 1 family.

It is found in the mitochondrion inner membrane. It catalyses the reaction a ubiquinone + NADH + 5 H(+)(in) = a ubiquinol + NAD(+) + 4 H(+)(out). Its function is as follows. Core subunit of the mitochondrial membrane respiratory chain NADH dehydrogenase (Complex I) that is believed to belong to the minimal assembly required for catalysis. Complex I functions in the transfer of electrons from NADH to the respiratory chain. The immediate electron acceptor for the enzyme is believed to be ubiquinone. The chain is NADH-ubiquinone oxidoreductase chain 1 (MT-ND1) from Tamias sibiricus (Siberian chipmunk).